Here is a 596-residue protein sequence, read N- to C-terminus: Elongation factor 4 (596 aa).

Residues 2 to 184 form the tr-type G domain; the sequence is DHIRNFSIIA…AVVARIPPPK (183 aa). GTP-binding positions include 14–19 and 131–134; these read DHGKST and NKID.

This sequence belongs to the TRAFAC class translation factor GTPase superfamily. Classic translation factor GTPase family. LepA subfamily.

The protein resides in the cell inner membrane. The enzyme catalyses GTP + H2O = GDP + phosphate + H(+). In terms of biological role, required for accurate and efficient protein synthesis under certain stress conditions. May act as a fidelity factor of the translation reaction, by catalyzing a one-codon backward translocation of tRNAs on improperly translocated ribosomes. Back-translocation proceeds from a post-translocation (POST) complex to a pre-translocation (PRE) complex, thus giving elongation factor G a second chance to translocate the tRNAs correctly. Binds to ribosomes in a GTP-dependent manner. This is Elongation factor 4 from Dechloromonas aromatica (strain RCB).